The following is a 1733-amino-acid chain: Gag-Pol polyprotein (1733 aa).

Gly2 is lipidated: N-myristoyl glycine; by host. The short motif at 109–112 (PTAP) is the PTAP/PSAP motif element. The LYPX(n)L motif motif lies at 128 to 132 (LYPAL). 3 disordered regions span residues 139-218 (KPPK…LRMG), 449-497 (KEER…RPQL), and 511-549 (WAKD…PEPR). The PPXY motif signature appears at 161–164 (PPPY). Residue Ser190 is modified to Phosphoserine; by host. The stretch at 436–476 (EEREERIRREIEEKEERRRAEDEQRERERDRRRHREMSKLL) forms a coiled coil. 2 stretches are compositionally biased toward basic and acidic residues: residues 449-464 (KEER…ERER) and 484-497 (RQDR…RPQL). Residues 500-517 (DQCAYCKEKGHWAKDCPK) form a CCHC-type zinc finger. Over residues 526–535 (RPQTSLLTLG) the composition is skewed to low complexity. The region spanning 559–629 (VTFLVDTGAQ…CPYPLLGRDL (71 aa)) is the Peptidase A2 domain. Asp564 functions as the Protease; shared with dimeric partner in the catalytic mechanism. Residues Tyr721, Asp771, Arg773, and Pro787 each coordinate RNA. Residues 739–930 (LDQGILVPCQ…KQVKYLGYLL (192 aa)) form the Reverse transcriptase domain. Residue Asp807 participates in Mg(2+) binding. The RNA site is built by Asn851 and Pro853. 2 residues coordinate Mg(2+): Asp881 and Asp882. DNA contacts are provided by Arg941, Arg955, Arg958, and Phe966. RNA contacts are provided by Lys1054 and Lys1055. Position 1063 (Trp1063) interacts with DNA. Residue Lys1082 coordinates RNA. Arg1113 contributes to the DNA binding site. One can recognise an RNase H type-1 domain in the interval 1172–1318 (PDADYTWYTD…ADQAAREAAM (147 aa)). Asp1181 is a Mg(2+) binding site. The RNA site is built by Ser1184 and Leu1186. Residues Gln1187, Ser1214, and Gln1216 each contribute to the DNA site. 2 residues coordinate Mg(2+): Glu1219 and Asp1240. Positions 1242 and 1266 each coordinate RNA. Mg(2+) is bound by residues Asp1310, Asp1453, and Asp1512. In terms of domain architecture, Integrase catalytic spans 1442 to 1600 (RGHRPGTHWE…TPYEILYGAP (159 aa)).

As to quaternary structure, homohexamer, that further associates as homomultimer. The virus core is composed of a lattice formed from hexagonal rings, each containing six capsid monomers. The protease is a homodimer, whose active site consists of two apposed aspartic acid residues. The reverse transcriptase is a monomer. Interacts (via PPXY motif) with host NEDD4. Interacts (via PSAP motif) with host TSG101. Interacts (via LYPX(n)L motif) with host PDCD6IP. In terms of assembly, the reverse transcriptase is a monomer (Potential). Interacts (via RNase domains) with host release factor ETF1; this interaction is essential for translational readthrough of amber codon between viral gag and pol genes, as well as for viral replication. As to quaternary structure, homodimer. Requires Mg(2+) as cofactor. The cofactor is Mn(2+). Specific enzymatic cleavages by the viral protease yield mature proteins. The protease is released by autocatalytic cleavage. The polyprotein is cleaved during and after budding, this process is termed maturation. Post-translationally, sumoylated; which is required for virus replication. In terms of processing, phosphorylated on serine residues.

The protein resides in the host cell membrane. It is found in the virion. It catalyses the reaction DNA(n) + a 2'-deoxyribonucleoside 5'-triphosphate = DNA(n+1) + diphosphate. The enzyme catalyses Endonucleolytic cleavage to 5'-phosphomonoester.. Plays a role in budding and is processed by the viral protease during virion maturation outside the cell. During budding, it recruits, in a PPXY-dependent or independent manner, Nedd4-like ubiquitin ligases that conjugate ubiquitin molecules to Gag, or to Gag binding host factors. Interaction with HECT ubiquitin ligases probably link the viral protein to the host ESCRT pathway and facilitate release. In terms of biological role, targets Gag and gag-pol polyproteins to the plasma membrane via a multipartite membrane binding signal, that includes its myristoylated N-terminus. Also mediates nuclear localization of the pre-integration complex. Functionally, forms the spherical core of the virion that encapsulates the genomic RNA-nucleocapsid complex. Its function is as follows. Involved in the packaging and encapsidation of two copies of the genome. Binds with high affinity to conserved UCUG elements within the packaging signal, located near the 5'-end of the genome. This binding is dependent on genome dimerization. Acts as a nucleic acid chaperone which is involved in rearrangement of nucleic acid secondary structures during gRNA retrotranscription. The aspartyl protease mediates proteolytic cleavages of Gag and Gag-Pol polyproteins during or shortly after the release of the virion from the plasma membrane. Cleavages take place as an ordered, step-wise cascade to yield mature proteins. This process is called maturation. Displays maximal activity during the budding process just prior to particle release from the cell. In terms of biological role, RT is a multifunctional enzyme that converts the viral dimeric RNA genome into dsDNA in the cytoplasm, shortly after virus entry into the cell. This enzyme displays a DNA polymerase activity that can copy either DNA or RNA templates, and a ribonuclease H (RNase H) activity that cleaves the RNA strand of RNA-DNA heteroduplexes in a partially processive 3' to 5' endonucleasic mode. Conversion of viral genomic RNA into dsDNA requires many steps. A tRNA binds to the primer-binding site (PBS) situated at the 5' end of the viral RNA. RT uses the 3' end of the tRNA primer to perform a short round of RNA-dependent minus-strand DNA synthesis. The reading proceeds through the U5 region and ends after the repeated (R) region which is present at both ends of viral RNA. The portion of the RNA-DNA heteroduplex is digested by the RNase H, resulting in a ssDNA product attached to the tRNA primer. This ssDNA/tRNA hybridizes with the identical R region situated at the 3' end of viral RNA. This template exchange, known as minus-strand DNA strong stop transfer, can be either intra- or intermolecular. RT uses the 3' end of this newly synthesized short ssDNA to perform the RNA-dependent minus-strand DNA synthesis of the whole template. RNase H digests the RNA template except for a polypurine tract (PPT) situated at the 5' end of the genome. It is not clear if both polymerase and RNase H activities are simultaneous. RNase H probably can proceed both in a polymerase-dependent (RNA cut into small fragments by the same RT performing DNA synthesis) and a polymerase-independent mode (cleavage of remaining RNA fragments by free RTs). Secondly, RT performs DNA-directed plus-strand DNA synthesis using the PPT that has not been removed by RNase H as primers. PPT and tRNA primers are then removed by RNase H. The 3' and 5' ssDNA PBS regions hybridize to form a circular dsDNA intermediate. Strand displacement synthesis by RT to the PBS and PPT ends produces a blunt ended, linear dsDNA copy of the viral genome that includes long terminal repeats (LTRs) at both ends. Functionally, catalyzes viral DNA integration into the host chromosome, by performing a series of DNA cutting and joining reactions. This enzyme activity takes place after virion entry into a cell and reverse transcription of the RNA genome in dsDNA. The first step in the integration process is 3' processing. This step requires a complex comprising the viral genome, matrix protein and integrase. This complex is called the pre-integration complex (PIC). The integrase protein removes 2 nucleotides from each 3' end of the viral DNA, leaving recessed CA OH's at the 3' ends. In the second step that requires cell division, the PIC enters cell nucleus. In the third step, termed strand transfer, the integrase protein joins the previously processed 3' ends to the 5' ends of strands of target cellular DNA at the site of integration. The last step is viral DNA integration into host chromosome. This chain is Gag-Pol polyprotein (gag-pol), found in Homo sapiens (Human).